Consider the following 315-residue polypeptide: Olfactory receptor 3A10 (315 aa).

Over 1 to 28 (MEPGAWGNRTAVTDFILLGLTGNVRLQP) the chain is Extracellular. An N-linked (GlcNAc...) asparagine glycan is attached at Asn-8. The helical transmembrane segment at 29–49 (ILFVVFFFAYIVTVGGNLSIL) threads the bilayer. The Cytoplasmic segment spans residues 50-68 (AAIFVEPKLHTPMYYFLGN). A helical transmembrane segment spans residues 69 to 89 (LSLLDIGCISVTVPPMLVCLL). Over 90 to 97 (AHECRVPY) the chain is Extracellular. A helical membrane pass occupies residues 98–118 (AACISQLFFFHLLAGVDCHLL). A disulfide bridge links Cys-100 with Cys-192. At 119-145 (TAMAYDRYLAICQPLTYSTRMSREVQG) the chain is on the cytoplasmic side. The helical transmembrane segment at 146 to 166 (TLVGICCTVSFINALTHTVAV) threads the bilayer. Residues 167 to 200 (SVLDFCGPNVVNHFYCDLPPLFQLSCSSIYLNGQ) lie on the Extracellular side of the membrane. The helical transmembrane segment at 201-221 (LLFVGATFMGVVPMILISVSY) threads the bilayer. Over 222–239 (AHVAAAVLRIRSTEGRKK) the chain is Cytoplasmic. A helical membrane pass occupies residues 240–260 (AFSTCGSHLTVVCIFYGTGFF). Residues 261–274 (SYMRLGSVSASDKD) lie on the Extracellular side of the membrane. The chain crosses the membrane as a helical span at residues 275–295 (KGIGILNTILSPMLNPLIYSL). Residues 296-315 (RNPDVQGALKRVLTGKRYPV) are Cytoplasmic-facing.

This sequence belongs to the G-protein coupled receptor 1 family.

It is found in the cell membrane. Functionally, odorant receptor. The sequence is that of Olfactory receptor 3A10 from Mus musculus (Mouse).